The following is a 3387-amino-acid chain: Genome polyprotein (3387 aa).

Over M1–S100 the chain is Cytoplasmic. Positions L36–L71 are hydrophobic; homodimerization of capsid protein C. Positions S100–A113 are cleaved as a propeptide — ER anchor for the capsid protein C, removed in mature form by serine protease NS3. Residues T101–S117 form a helical membrane-spanning segment. At T118–E237 the chain is on the extracellular side. Residue N182 is glycosylated (N-linked (GlcNAc...) asparagine; by host). A helical transmembrane segment spans residues S238–G258. Residues Q259–T265 lie on the Cytoplasmic side of the membrane. A helical membrane pass occupies residues V266 to G279. The Extracellular segment spans residues M280–Y723. 6 disulfides stabilise this stretch: C282-C309, C339-C400, C353-C384, C371-C395, C464-C564, and C581-C612. N-linked (GlcNAc...) asparagine; by host glycosylation is present at N346. Residues D377 to G390 form a fusion peptide region. The helical transmembrane segment at T724–G746 threads the bilayer. The Cytoplasmic segment spans residues T747–R750. A helical membrane pass occupies residues N751–T771. At V772–M1194 the chain is on the extracellular side. 6 cysteine pairs are disulfide-bonded: C778/C789, C829/C917, C953/C997, C1054/C1103, C1065/C1087, and C1086/C1090. N904 and N981 each carry an N-linked (GlcNAc...) asparagine; by host glycan. A helical membrane pass occupies residues G1195–L1218. Residues R1219–R1224 are Lumenal-facing. A helical membrane pass occupies residues E1225–H1243. Residues D1244–N1267 are Cytoplasmic-facing. The chain crosses the membrane as a helical span at residues T1268 to M1288. Residue A1289 is a topological domain, lumenal. Residues W1290 to T1308 traverse the membrane as a helical segment. The Lumenal segment spans residues S1309 to H1316. A helical transmembrane segment spans residues W1317–L1337. The Cytoplasmic portion of the chain corresponds to M1338 to S1345. A helical transmembrane segment spans residues W1346–L1366. At K1367–D1369 the chain is on the lumenal side. Residues V1370 to G1390 traverse the membrane as a helical segment. Residues S1391–N1437 lie on the Cytoplasmic side of the membrane. The interval L1397–T1436 is interacts with and activates NS3 protease. Positions M1438–I1458 form an intramembrane region, helical. Residues P1459 to T2146 are Cytoplasmic-facing. The Peptidase S7 domain maps to S1475–V1652. Active-site charge relay system; for serine protease NS3 activity residues include H1525, D1549, and S1609. The Helicase ATP-binding domain occupies E1654–E1810. Residues R1658 to R1661 form an important for RNA-binding region. L1667–T1674 provides a ligand contact to ATP. The DEAH box motif lies at D1758–H1761. Residues T1820–R1987 form the Helicase C-terminal domain. At K1862 the chain carries N6-acetyllysine; by host. A helical membrane pass occupies residues L2147 to G2167. The Lumenal segment spans residues K2168–G2169. Residues I2170–A2190 constitute an intramembrane region (helical). A topological domain (lumenal) is located at residue E2191. Residues I2192 to I2212 traverse the membrane as a helical segment. Topologically, residues P2213 to Q2225 are cytoplasmic. Residues L2226 to G2246 traverse the membrane as a helical segment. At L2247–D2270 the chain is on the lumenal side. The segment at residues L2271–L2291 is an intramembrane region (helical). Topologically, residues R2292 to N2301 are lumenal. N2297 and N2301 each carry an N-linked (GlcNAc...) asparagine; by host glycan. The segment at residues L2302–P2322 is an intramembrane region (helical). Over L2323–P2343 the chain is Lumenal. The chain crosses the membrane as a helical span at residues T2344–L2364. The Cytoplasmic segment spans residues Q2365 to Q2409. The helical transmembrane segment at V2410–C2430 threads the bilayer. The Lumenal segment spans residues E2431–T2455. A glycan (N-linked (GlcNAc...) asparagine; by host) is linked at N2453. The helical transmembrane segment at I2456–F2476 threads the bilayer. At S2477–L3387 the chain is on the cytoplasmic side. The region spanning T2489–S2751 is the mRNA cap 0-1 NS5-type MT domain. Residue S2543 participates in S-adenosyl-L-methionine binding. S2543 carries the post-translational modification Phosphoserine. The For 2'-O-MTase activity role is filled by K2548. The SUMO-interacting motif signature appears at V2564–L2567. Residues G2573, W2574, T2591, K2592, D2618, and V2619 each contribute to the S-adenosyl-L-methionine site. The active-site For 2'-O-MTase activity is the D2633. S-adenosyl-L-methionine is bound at residue I2634. Catalysis depends on for 2'-O-MTase activity residues K2668 and E2704. Y2706 is an S-adenosyl-L-methionine binding site. Zn(2+)-binding residues include E2925, H2929, C2934, and C2937. Residues L3016 to L3166 enclose the RdRp catalytic domain. 3 residues coordinate Zn(2+): H3200, C3216, and C3335.

It in the N-terminal section; belongs to the class I-like SAM-binding methyltransferase superfamily. mRNA cap 0-1 NS5-type methyltransferase family. Homodimer. Interacts (via N-terminus) with host EXOC1 (via C-terminus); this interaction results in EXOC1 degradation through the proteasome degradation pathway. In terms of assembly, forms heterodimers with envelope protein E in the endoplasmic reticulum and Golgi. As to quaternary structure, homodimer; in the endoplasmic reticulum and Golgi. Interacts with protein prM. Interacts with non-structural protein 1. Homodimer; Homohexamer when secreted. Interacts with envelope protein E. In terms of assembly, interacts (via N-terminus) with serine protease NS3. As to quaternary structure, forms a heterodimer with serine protease NS3. May form homooligomers. Forms a heterodimer with NS2B. Interacts with NS4B. Interacts with unphosphorylated RNA-directed RNA polymerase NS5; this interaction stimulates RNA-directed RNA polymerase NS5 guanylyltransferase activity. In terms of assembly, interacts with host MAVS; this interaction inhibits the synthesis of IFN-beta. Interacts with host AUP1; the interaction occurs in the presence of Dengue virus NS4B and induces lipophagy which facilitates production of virus progeny particles. As to quaternary structure, interacts with serine protease NS3. Homodimer. Interacts with host STAT2; this interaction inhibits the phosphorylation of the latter, and, when all viral proteins are present (polyprotein), targets STAT2 for degradation. Interacts with serine protease NS3. Interacts with host PAF1 complex; the interaction may prevent the recruitment of the PAF1 complex to interferon-responsive genes, and thus reduces the immune response. Specific enzymatic cleavages in vivo yield mature proteins. Cleavages in the lumen of endoplasmic reticulum are performed by host signal peptidase, whereas cleavages in the cytoplasmic side are performed by serine protease NS3. Signal cleavage at the 2K-4B site requires a prior NS3 protease-mediated cleavage at the 4A-2K site. Post-translationally, cleaved in post-Golgi vesicles by a host furin, releasing the mature small envelope protein M, and peptide pr. This cleavage is incomplete as up to 30% of viral particles still carry uncleaved prM. In terms of processing, N-glycosylated. N-glycosylated. The excreted form is glycosylated and this is required for efficient secretion of the protein from infected cells. Post-translationally, acetylated by host KAT5. Acetylation modulates NS3 RNA-binding and unwinding activities and plays an important positive role for viral replication. In terms of processing, sumoylation of RNA-directed RNA polymerase NS5 increases NS5 protein stability allowing proper viral RNA replication. Phosphorylated on serines residues. This phosphorylation may trigger NS5 nuclear localization.

It localises to the virion. The protein resides in the host nucleus. It is found in the host cytoplasm. The protein localises to the host perinuclear region. Its subcellular location is the secreted. It localises to the virion membrane. The protein resides in the host endoplasmic reticulum membrane. It is found in the host mitochondrion. The catalysed reaction is Selective hydrolysis of -Xaa-Xaa-|-Yaa- bonds in which each of the Xaa can be either Arg or Lys and Yaa can be either Ser or Ala.. It carries out the reaction RNA(n) + a ribonucleoside 5'-triphosphate = RNA(n+1) + diphosphate. The enzyme catalyses a ribonucleoside 5'-triphosphate + H2O = a ribonucleoside 5'-diphosphate + phosphate + H(+). It catalyses the reaction ATP + H2O = ADP + phosphate + H(+). The catalysed reaction is a 5'-end (5'-triphosphoguanosine)-ribonucleoside in mRNA + S-adenosyl-L-methionine = a 5'-end (N(7)-methyl 5'-triphosphoguanosine)-ribonucleoside in mRNA + S-adenosyl-L-homocysteine. It carries out the reaction a 5'-end (N(7)-methyl 5'-triphosphoguanosine)-ribonucleoside in mRNA + S-adenosyl-L-methionine = a 5'-end (N(7)-methyl 5'-triphosphoguanosine)-(2'-O-methyl-ribonucleoside) in mRNA + S-adenosyl-L-homocysteine + H(+). Its function is as follows. Plays a role in virus budding by binding to the cell membrane and gathering the viral RNA into a nucleocapsid that forms the core of a mature virus particle. During virus entry, may induce genome penetration into the host cytoplasm after hemifusion induced by the surface proteins. Can migrate to the cell nucleus where it modulates host functions. Overcomes the anti-viral effects of host EXOC1 by sequestering and degrading the latter through the proteasome degradation pathway. Functionally, inhibits RNA silencing by interfering with host Dicer. In terms of biological role, prevents premature fusion activity of envelope proteins in trans-Golgi by binding to envelope protein E at pH6.0. After virion release in extracellular space, gets dissociated from E dimers. Acts as a chaperone for envelope protein E during intracellular virion assembly by masking and inactivating envelope protein E fusion peptide. prM is the only viral peptide matured by host furin in the trans-Golgi network probably to avoid catastrophic activation of the viral fusion activity in acidic Golgi compartment prior to virion release. prM-E cleavage is inefficient, and many virions are only partially matured. These uncleaved prM would play a role in immune evasion. Its function is as follows. May play a role in virus budding. Exerts cytotoxic effects by activating a mitochondrial apoptotic pathway through M ectodomain. May display a viroporin activity. Functionally, binds to host cell surface receptor and mediates fusion between viral and cellular membranes. Envelope protein is synthesized in the endoplasmic reticulum in the form of heterodimer with protein prM. They play a role in virion budding in the ER, and the newly formed immature particle is covered with 60 spikes composed of heterodimer between precursor prM and envelope protein E. The virion is transported to the Golgi apparatus where the low pH causes dissociation of PrM-E heterodimers and formation of E homodimers. prM-E cleavage is inefficient, and many virions are only partially matured. These uncleaved prM would play a role in immune evasion. In terms of biological role, involved in immune evasion, pathogenesis and viral replication. Once cleaved off the polyprotein, is targeted to three destinations: the viral replication cycle, the plasma membrane and the extracellular compartment. Essential for viral replication. Required for formation of the replication complex and recruitment of other non-structural proteins to the ER-derived membrane structures. Excreted as a hexameric lipoparticle that plays a role against host immune response. Antagonizing the complement function. Binds to the host macrophages and dendritic cells. Inhibits signal transduction originating from Toll-like receptor 3 (TLR3). Disrupts the host endothelial glycocalyx layer of host pulmonary microvascular endothelial cells, inducing degradation of sialic acid and shedding of heparan sulfate proteoglycans. NS1 induces expression of sialidases, heparanase, and activates cathepsin L, which activates heparanase via enzymatic cleavage. These effects are probably linked to the endothelial hyperpermeability observed in severe dengue disease. Its function is as follows. Component of the viral RNA replication complex that functions in virion assembly and antagonizes the host immune response. Functionally, required cofactor for the serine protease function of NS3. May have membrane-destabilizing activity and form viroporins. In terms of biological role, displays three enzymatic activities: serine protease, NTPase and RNA helicase. NS3 serine protease, in association with NS2B, performs its autocleavage and cleaves the polyprotein at dibasic sites in the cytoplasm: C-prM, NS2A-NS2B, NS2B-NS3, NS3-NS4A, NS4A-2K and NS4B-NS5. NS3 RNA helicase binds RNA and unwinds dsRNA in the 3' to 5' direction. Regulates the ATPase activity of the NS3 helicase activity. NS4A allows NS3 helicase to conserve energy during unwinding. Plays a role in the inhibition of the host innate immune response. Interacts with host MAVS and thereby prevents the interaction between RIGI and MAVS. In turn, IFN-beta production is impaired. Interacts with host AUP1 which mediates induction of lipophagy in host cells and facilitates production of virus progeny particles. Its function is as follows. Functions as a signal peptide for NS4B and is required for the interferon antagonism activity of the latter. Functionally, induces the formation of ER-derived membrane vesicles where the viral replication takes place. Inhibits interferon (IFN)-induced host STAT1 phosphorylation and nuclear translocation, thereby preventing the establishment of cellular antiviral state by blocking the IFN-alpha/beta pathway. In terms of biological role, replicates the viral (+) and (-) RNA genome, and performs the capping of genomes in the cytoplasm. NS5 methylates viral RNA cap at guanine N-7 and ribose 2'-O positions. Besides its role in RNA genome replication, also prevents the establishment of cellular antiviral state by blocking the interferon-alpha/beta (IFN-alpha/beta) signaling pathway. Inhibits host TYK2 and STAT2 phosphorylation, thereby preventing activation of JAK-STAT signaling pathway. May reduce immune responses by preventing the recruitment of the host PAF1 complex to interferon-responsive genes. The sequence is that of Genome polyprotein from Aedes aegypti (Yellowfever mosquito).